The primary structure comprises 368 residues: Nicotinate-nucleotide--dimethylbenzimidazole phosphoribosyltransferase (368 aa).

Glu314 functions as the Proton acceptor in the catalytic mechanism. The segment at 344 to 368 (DRADGADNSADSGASAGTVASDPTV) is disordered. Over residues 349-360 (ADNSADSGASAG) the composition is skewed to low complexity.

It belongs to the CobT family.

It carries out the reaction 5,6-dimethylbenzimidazole + nicotinate beta-D-ribonucleotide = alpha-ribazole 5'-phosphate + nicotinate + H(+). It participates in nucleoside biosynthesis; alpha-ribazole biosynthesis; alpha-ribazole from 5,6-dimethylbenzimidazole: step 1/2. Catalyzes the synthesis of alpha-ribazole-5'-phosphate from nicotinate mononucleotide (NAMN) and 5,6-dimethylbenzimidazole (DMB). This chain is Nicotinate-nucleotide--dimethylbenzimidazole phosphoribosyltransferase, found in Corynebacterium efficiens (strain DSM 44549 / YS-314 / AJ 12310 / JCM 11189 / NBRC 100395).